Reading from the N-terminus, the 852-residue chain is Lon protease homolog 2, peroxisomal (852 aa).

S2 is subject to N-acetylserine. The Lon N-terminal domain occupies 13-222 (LPLLLTHEGV…MTIPLLVRQI (210 aa)). 375–382 (GPPGVGKT) serves as a coordination point for ATP. The 187-residue stretch at 651–837 (LSQPGVAIGL…DEVLNAAFDG (187 aa)) folds into the Lon proteolytic domain. Active-site residues include S743 and K786. A Microbody targeting signal motif is present at residues 850–852 (SKL).

Belongs to the peptidase S16 family. As to quaternary structure, interacts with PEX5. Interacts with TYSND1. May interact with enzymes involved in beta-oxidation of fatty acids, including ACOX1/AOX. Widely expressed, with high levels in the liver, kidney and pancreas.

The protein localises to the peroxisome matrix. It catalyses the reaction Hydrolysis of proteins in presence of ATP.. Its function is as follows. ATP-dependent serine protease that mediates the selective degradation of misfolded and unassembled polypeptides in the peroxisomal matrix. Necessary for type 2 peroxisome targeting signal (PTS2)-containing protein processing and facilitates peroxisome matrix protein import. May indirectly regulate peroxisomal fatty acid beta-oxidation through degradation of the self-processed forms of TYSND1. This chain is Lon protease homolog 2, peroxisomal, found in Homo sapiens (Human).